Reading from the N-terminus, the 257-residue chain is Movement protein (257 aa).

The segment at 212 to 257 is disordered; the sequence is NQSKKGSNKYVGKRNDNKGLNKEGKLFDKVRIGQNSESSDAESSSF. The segment covering 224 to 242 has biased composition (basic and acidic residues); sequence KRNDNKGLNKEGKLFDKVR. The segment covering 247–257 has biased composition (low complexity); it reads SESSDAESSSF.

The protein belongs to the tobamovirus movement protein family.

Its subcellular location is the host cytoplasm. It is found in the host cytoskeleton. The protein localises to the host cell junction. The protein resides in the host plasmodesma. Transports viral genome to neighboring plant cells directly through plasmosdesmata, without any budding. The movement protein allows efficient cell to cell propagation, by bypassing the host cell wall barrier. Forms a ribonucleoprotein complex with viral RNA. Binds microtubules and modulates microtubule stability. Can bind double-stranded DNA. This is Movement protein (MP) from Pepper mild mottle virus (strain Spain) (PMMV-S).